The primary structure comprises 300 residues: uncharacterized protein (300 aa).

2 disordered regions span residues 167–186 and 224–244; these read DVFL…HHEH and ADGS…DASH. Residues 224–236 show a composition bias toward polar residues; that stretch reads ADGSSLETSSMSS.

This is an uncharacterized protein from Rattus norvegicus (Rat).